Here is a 317-residue protein sequence, read N- to C-terminus: Ribosomal protein L11 methyltransferase (317 aa).

Residues threonine 169, glycine 190, aspartate 211, and asparagine 256 each coordinate S-adenosyl-L-methionine.

It belongs to the methyltransferase superfamily. PrmA family.

Its subcellular location is the cytoplasm. It catalyses the reaction L-lysyl-[protein] + 3 S-adenosyl-L-methionine = N(6),N(6),N(6)-trimethyl-L-lysyl-[protein] + 3 S-adenosyl-L-homocysteine + 3 H(+). Methylates ribosomal protein L11. This is Ribosomal protein L11 methyltransferase from Helicobacter hepaticus (strain ATCC 51449 / 3B1).